Reading from the N-terminus, the 238-residue chain is Ribosomal RNA small subunit methyltransferase G (238 aa).

S-adenosyl-L-methionine is bound by residues Gly75, Leu80, Ala126 to Glu127, and Arg142.

The protein belongs to the methyltransferase superfamily. RNA methyltransferase RsmG family.

It is found in the cytoplasm. Specifically methylates the N7 position of guanine in position 518 of 16S rRNA. The chain is Ribosomal RNA small subunit methyltransferase G from Streptomyces avermitilis (strain ATCC 31267 / DSM 46492 / JCM 5070 / NBRC 14893 / NCIMB 12804 / NRRL 8165 / MA-4680).